The primary structure comprises 296 residues: Probable cell wall protein PGA41 (296 aa).

The N-terminal stretch at 1 to 18 is a signal peptide; it reads MKFTIVLFTLISVTVAAA. Positions 146–212 are enriched in low complexity; sequence IASSTKESSS…ITTISSDSST (67 aa). The disordered stretch occupies residues 146 to 276; the sequence is IASSTKESSS…PNSSQTAPGA (131 aa). The segment covering 220-245 has biased composition (gly residues); that stretch reads QGGGGNSGNNGSNGDGGNDASGGGGV. N-linked (GlcNAc...) asparagine glycans are attached at residues Asn229 and Asn268. The span at 247-274 shows a compositional bias: low complexity; that stretch reads NENEQASSPPSSQSSTNSNQPNSSQTAP. The GPI-anchor amidated glycine moiety is linked to residue Gly275. Positions 276 to 296 are cleaved as a propeptide — removed in mature form; it reads AANYLSSVSVGTLMILVLGLI.

Belongs to the IHD1 family. Post-translationally, the GPI-anchor is attached to the protein in the endoplasmic reticulum and serves to target the protein to the cell surface. There, the glucosamine-inositol phospholipid moiety is cleaved off and the GPI-modified mannoprotein is covalently attached via its lipidless GPI glycan remnant to the 1,6-beta-glucan of the outer cell wall layer.

The protein resides in the secreted. The protein localises to the cell wall. Its subcellular location is the membrane. Probable GPI-anchored cell wall protein that may be involved in cell wall organization, hyphal growth, as well as in virulence. The chain is Probable cell wall protein PGA41 (PGA41) from Candida albicans (strain SC5314 / ATCC MYA-2876) (Yeast).